Here is a 407-residue protein sequence, read N- to C-terminus: S-adenosylmethionine synthase (407 aa).

Histidine 15 is a binding site for ATP. Mg(2+) is bound at residue aspartate 17. Glutamate 43 provides a ligand contact to K(+). Positions 56 and 99 each coordinate L-methionine. Positions glutamine 99–threonine 109 are flexible loop. Residues glutamate 112–glycine 131 are disordered. ATP-binding positions include aspartate 179–lysine 181, arginine 252–phenylalanine 253, aspartate 261, arginine 267–lysine 268, alanine 284, and lysine 288. L-methionine is bound at residue aspartate 261. Lysine 292 serves as a coordination point for L-methionine.

This sequence belongs to the AdoMet synthase family. In terms of assembly, homotetramer; dimer of dimers. It depends on Mg(2+) as a cofactor. K(+) serves as cofactor.

The protein resides in the cytoplasm. The catalysed reaction is L-methionine + ATP + H2O = S-adenosyl-L-methionine + phosphate + diphosphate. It participates in amino-acid biosynthesis; S-adenosyl-L-methionine biosynthesis; S-adenosyl-L-methionine from L-methionine: step 1/1. Catalyzes the formation of S-adenosylmethionine (AdoMet) from methionine and ATP. The overall synthetic reaction is composed of two sequential steps, AdoMet formation and the subsequent tripolyphosphate hydrolysis which occurs prior to release of AdoMet from the enzyme. This chain is S-adenosylmethionine synthase, found in Streptomyces fradiae (Streptomyces roseoflavus).